A 714-amino-acid polypeptide reads, in one-letter code: Phosphate acetyltransferase (714 aa).

Residues 391-714 (AFRYQLTELA…LTAIQSAQQQ (324 aa)) are phosphate acetyltransferase.

In the N-terminal section; belongs to the CobB/CobQ family. The protein in the C-terminal section; belongs to the phosphate acetyltransferase and butyryltransferase family. In terms of assembly, homohexamer.

It is found in the cytoplasm. The enzyme catalyses acetyl-CoA + phosphate = acetyl phosphate + CoA. It functions in the pathway metabolic intermediate biosynthesis; acetyl-CoA biosynthesis; acetyl-CoA from acetate: step 2/2. With respect to regulation, inhibited by NADH and ATP. Pyruvate and PEP act as activators of the acetyl phosphate forming reaction while inhibiting the formation of acetyl-CoA. Functionally, involved in acetate metabolism. Catalyzes the reversible interconversion of acetyl-CoA and acetyl phosphate. The direction of the overall reaction changes depending on growth conditions. On minimal medium acetyl-CoA is generated. In rich medium acetyl-CoA is converted to acetate and allowing the cell to dump the excess of acetylation potential in exchange for energy in the form of ATP. The main pathway for acetate production during exponential phase. In Escherichia coli (strain K12), this protein is Phosphate acetyltransferase (pta).